The following is a 107-amino-acid chain: Integration host factor subunit alpha (107 aa).

This sequence belongs to the bacterial histone-like protein family. As to quaternary structure, heterodimer of an alpha and a beta chain.

In terms of biological role, this protein is one of the two subunits of integration host factor, a specific DNA-binding protein that functions in genetic recombination as well as in transcriptional and translational control. The chain is Integration host factor subunit alpha from Brucella suis (strain ATCC 23445 / NCTC 10510).